The primary structure comprises 500 residues: MSPGLLLLGSAVLLAFGLCCTFVHRARSRYEHIPGPPRPSFLLGHLPYFWKKDEDCGRVLQDVFLDWAKKYGPVVRVNVFYKTSVIVTSPESVKKFLMSTKYNKDSKMYRALQTVFGERLFGQGLVSECDYGRWYKQRKVMDLAFSRSSLVSLMETFNEKAEQLVEILEAKADGQTPVSMQDMLTCATIDILAKAAFGMETSMLLGAQKPLSQAVKVMLEGISASRNTLAKFMPGKRKQLREIRESIRLLRQVGKDWVQRRREALKRGEDMPADILTQILKAEEGAQDDEVLLDNFVTFFIAGHETSANHLAFTVMELSRQPEIVARLQAEVDEVVGSKRHLDYEDLGRLQYLSQVLKESLRLYPPAWGTFRLLEEETLIDGVRVPGNTPLLFSTYVMGRMDTYFEDPLTFNPDRFGPGAPKPRFTYFPFSLGHRSCIGQQFAQMEVKVVMAKLLQRIEFRLVPGQRFGLQEQATLKPLDPVLCTLRPRGWQPAPPPPPC.

The helical transmembrane segment at 3-23 (PGLLLLGSAVLLAFGLCCTFV) threads the bilayer. Position 437 (Cys-437) interacts with heme.

Belongs to the cytochrome P450 family. It depends on heme as a cofactor. As to expression, expressed in high level in the pyramidal cells of the hippocampus, Purkinje cells of the cerebellum, and neuronal cell bodies in layers II/III, V, and VI of the cortex. Expressed in hippocampal and cerebellar interneurons, in retinal ganglion cells, and in a subset of retinal cells localized to the inner nuclear layer (at protein level).

The protein resides in the endoplasmic reticulum membrane. The protein localises to the microsome membrane. Its subcellular location is the postsynapse. It is found in the presynapse. It localises to the cell projection. The protein resides in the dendrite. It catalyses the reaction cholesterol + reduced [NADPH--hemoprotein reductase] + O2 = (24S)-hydroxycholesterol + oxidized [NADPH--hemoprotein reductase] + H2O + H(+). It carries out the reaction cholestanol + reduced [NADPH--hemoprotein reductase] + O2 = (24S)-hydroxycholestanol + oxidized [NADPH--hemoprotein reductase] + H2O + H(+). The catalysed reaction is 7-dehydrocholesterol + reduced [NADPH--hemoprotein reductase] + O2 = cholesta-5,7-dien-3beta,24S-diol + oxidized [NADPH--hemoprotein reductase] + H2O + H(+). The enzyme catalyses 7-dehydrocholesterol + reduced [NADPH--hemoprotein reductase] + O2 = cholesta-5,7-dien-3beta,25-diol + oxidized [NADPH--hemoprotein reductase] + H2O + H(+). It catalyses the reaction desmosterol + reduced [NADPH--hemoprotein reductase] + O2 = (24Z),26-hydroxydesmosterol + oxidized [NADPH--hemoprotein reductase] + H2O + H(+). It carries out the reaction desmosterol + reduced [NADPH--hemoprotein reductase] + O2 = (24S)-25-epoxycholesterol + oxidized [NADPH--hemoprotein reductase] + H2O + H(+). The catalysed reaction is 4beta-hydroxycholesterol + reduced [NADPH--hemoprotein reductase] + O2 = 4beta,24S-dihydroxycholesterol + oxidized [NADPH--hemoprotein reductase] + H2O + H(+). The enzyme catalyses (24S)-hydroxycholesterol + reduced [NADPH--hemoprotein reductase] + O2 = (24S,25R)-24,26-dihydroxycholesterol + oxidized [NADPH--hemoprotein reductase] + H2O + H(+). It catalyses the reaction (24S)-hydroxycholesterol + reduced [NADPH--hemoprotein reductase] + O2 = 24S,25-dihydroxycholesterol + oxidized [NADPH--hemoprotein reductase] + H2O + H(+). It carries out the reaction 7alpha-hydroxycholesterol + reduced [NADPH--hemoprotein reductase] + O2 = (24S)-7alpha-dihydroxycholesterol + oxidized [NADPH--hemoprotein reductase] + H2O + H(+). The catalysed reaction is progesterone + reduced [NADPH--hemoprotein reductase] + O2 = 17alpha-hydroxyprogesterone + oxidized [NADPH--hemoprotein reductase] + H2O + H(+). The enzyme catalyses testosterone + reduced [NADPH--hemoprotein reductase] + O2 = 16beta,17beta-dihydroxyandrost-4-en-3-one + oxidized [NADPH--hemoprotein reductase] + H2O + H(+). It catalyses the reaction testosterone + reduced [NADPH--hemoprotein reductase] + O2 = 2-hydroxytestosterone + oxidized [NADPH--hemoprotein reductase] + H2O + H(+). It carries out the reaction testosterone + reduced [NADPH--hemoprotein reductase] + O2 = 6beta,17beta-dihydroxyandrost-4-en-3-one + oxidized [NADPH--hemoprotein reductase] + H2O + H(+). It functions in the pathway steroid metabolism; cholesterol degradation. Its pathway is lipid metabolism; C21-steroid hormone metabolism. P450 monooxygenase that plays a major role in cholesterol homeostasis in the brain. Primarily catalyzes the hydroxylation (with S stereochemistry) at C-24 of cholesterol side chain, triggering cholesterol diffusion out of neurons and its further degradation. By promoting constant cholesterol elimination in neurons, may activate the mevalonate pathway and coordinate the synthesis of new cholesterol and nonsterol isoprenoids involved in synaptic activity and learning. Further hydroxylates cholesterol derivatives and hormone steroids on both the ring and side chain of these molecules, converting them into active oxysterols involved in lipid signaling and biosynthesis. Acts as an epoxidase converting cholesta-5,24-dien-3beta-ol/desmosterol into (24S),25-epoxycholesterol, an abundant lipid ligand of nuclear NR1H2 and NR1H3 receptors shown to promote neurogenesis in developing brain. May also catalyze the oxidative metabolism of xenobiotics, such as clotrimazole. The sequence is that of Cholesterol 24-hydroxylase from Mus musculus (Mouse).